We begin with the raw amino-acid sequence, 547 residues long: Chaperonin GroEL (547 aa).

Residues 30 to 33 (TLGP), Lys-51, 87 to 91 (DGTTT), Gly-416, 480 to 482 (NAA), and Asp-496 each bind ATP.

Belongs to the chaperonin (HSP60) family. As to quaternary structure, forms a cylinder of 14 subunits composed of two heptameric rings stacked back-to-back. Interacts with the co-chaperonin GroES.

It localises to the cytoplasm. The catalysed reaction is ATP + H2O + a folded polypeptide = ADP + phosphate + an unfolded polypeptide.. Functionally, together with its co-chaperonin GroES, plays an essential role in assisting protein folding. The GroEL-GroES system forms a nano-cage that allows encapsulation of the non-native substrate proteins and provides a physical environment optimized to promote and accelerate protein folding. The sequence is that of Chaperonin GroEL from Pseudoalteromonas translucida (strain TAC 125).